The primary structure comprises 246 residues: Thiamine import ATP-binding protein ThiQ (246 aa).

Positions 10 to 239 (VKLDALAFAY…QGPPAFARYL (230 aa)) constitute an ABC transporter domain. ATP is bound at residue 41 to 48 (GPSGSGKS).

This sequence belongs to the ABC transporter superfamily. Thiamine importer (TC 3.A.1.19.1) family. The complex is composed of two ATP-binding proteins (ThiQ), two transmembrane proteins (ThiP) and a solute-binding protein (ThiB).

It localises to the cell inner membrane. The enzyme catalyses thiamine(out) + ATP + H2O = thiamine(in) + ADP + phosphate + H(+). In terms of biological role, part of the ABC transporter complex ThiBPQ involved in thiamine import. Responsible for energy coupling to the transport system. The chain is Thiamine import ATP-binding protein ThiQ from Chelativorans sp. (strain BNC1).